Consider the following 354-residue polypeptide: Sulfate permease CysP (354 aa).

A run of 8 helical transmembrane segments spans residues 3 to 23, 40 to 60, 77 to 97, 125 to 145, 164 to 184, 197 to 217, 293 to 313, and 320 to 340; these read LAAI…GAAA, ALIL…GEVV, IVCI…LLGI, LIIV…TYFV, ILGI…GMNN, VLDV…GALL, VWIV…SLFL, and IFIM…TKAI.

Belongs to the inorganic phosphate transporter (PiT) (TC 2.A.20) family.

The protein resides in the cell membrane. In terms of biological role, involved in the import of sulfate. In Bacillus subtilis (strain 168), this protein is Sulfate permease CysP (cysP).